Consider the following 170-residue polypeptide: Myosin regulatory light chain 2, skeletal muscle isoform (170 aa).

Residue A2 is modified to N,N,N-trimethylalanine. Residues S16 and S17 each carry the phosphoserine modification. Phosphothreonine occurs at positions 26 and 36. The EF-hand 1 domain occupies 26–61 (TQIQEFKEAFTVIDQNRDGIIDKEDLRDTFAAMGRL). Residues D39, N41, D43, and D50 each coordinate Ca(2+). Position 76 is a phosphoserine (S76). 2 consecutive EF-hand domains span residues 96–131 (DPEDVITGAFKVLDPEGKGTIKKKFLEELLTTQCDR) and 132–167 (FSQEEIKNMWAAFPPDVGGNVDYKNICYVITHGDAK). T102 bears the Phosphothreonine mark.

In terms of assembly, myosin is a hexamer of 2 heavy chains and 4 light chains.

Plays a role in muscle contraction. The chain is Myosin regulatory light chain 2, skeletal muscle isoform from Bos taurus (Bovine).